The following is a 277-amino-acid chain: Undecaprenyl-diphosphatase (277 aa).

Helical transmembrane passes span 88–108 (MGWL…LFQD), 117–137 (MWIV…ADAV), 157–179 (FAQA…AGLL), 191–211 (SFLL…YKTV), 227–247 (LATV…LKFV), and 255–275 (FVWY…FNVI).

Belongs to the UppP family.

The protein resides in the cell membrane. It carries out the reaction di-trans,octa-cis-undecaprenyl diphosphate + H2O = di-trans,octa-cis-undecaprenyl phosphate + phosphate + H(+). Functionally, catalyzes the dephosphorylation of undecaprenyl diphosphate (UPP). Confers resistance to bacitracin. This is Undecaprenyl-diphosphatase from Paenarthrobacter aurescens (strain TC1).